The following is a 183-amino-acid chain: Dual-action ribosomal maturation protein DarP (183 aa).

This sequence belongs to the DarP family.

Its subcellular location is the cytoplasm. Member of a network of 50S ribosomal subunit biogenesis factors which assembles along the 30S-50S interface, preventing incorrect 23S rRNA structures from forming. Promotes peptidyl transferase center (PTC) maturation. The sequence is that of Dual-action ribosomal maturation protein DarP from Shigella boydii serotype 18 (strain CDC 3083-94 / BS512).